We begin with the raw amino-acid sequence, 277 residues long: Thymidylate synthase (277 aa).

R21 contacts dUMP. Residue H51 coordinates (6R)-5,10-methylene-5,6,7,8-tetrahydrofolate. 126-127 (RR) serves as a coordination point for dUMP. The active-site Nucleophile is the C159. DUMP-binding positions include 179–182 (RSAD), N190, and 220–222 (HLY). D182 serves as a coordination point for (6R)-5,10-methylene-5,6,7,8-tetrahydrofolate. S276 contacts (6R)-5,10-methylene-5,6,7,8-tetrahydrofolate.

This sequence belongs to the thymidylate synthase family. Bacterial-type ThyA subfamily. As to quaternary structure, homodimer.

The protein localises to the cytoplasm. The catalysed reaction is dUMP + (6R)-5,10-methylene-5,6,7,8-tetrahydrofolate = 7,8-dihydrofolate + dTMP. It participates in pyrimidine metabolism; dTTP biosynthesis. Its function is as follows. Catalyzes the reductive methylation of 2'-deoxyuridine-5'-monophosphate (dUMP) to 2'-deoxythymidine-5'-monophosphate (dTMP) while utilizing 5,10-methylenetetrahydrofolate (mTHF) as the methyl donor and reductant in the reaction, yielding dihydrofolate (DHF) as a by-product. This enzymatic reaction provides an intracellular de novo source of dTMP, an essential precursor for DNA biosynthesis. The sequence is that of Thymidylate synthase from Teredinibacter turnerae (strain ATCC 39867 / T7901).